The sequence spans 391 residues: MVEADRPGKLFIGGLNTETNEKALEAVFGKYGRIVEVLLMKDRETNKSRGFAFVTFESPADAKDAARDMNGKSLDGKAIKVEQATKPSFESGRRGPPPPPRSRGPPRGLRGGRGGSGGTRGPPSRGGHMDDGGYSMNFNMSSSRGPLPVKRGPPPRSGGPPPKRSAPSGPVRSSSGMGGRAPVSRGRDSYGGPPRREPLPSRRDVYLSPRDDGYSTKDSYSSRDYPSSRDTRDYAPPPRDYTYRDYGHSSSRDDYPSRGYSDRDGYGRDRDYSDHPSGGSYRDSYESYGNSRSAPPTRGPPPSYGGSSRYDDYSSSRDGYGGSRDSYSSSRSDLYSSGRDRVGRQDRGLPPSMERGYPPPRDSYSSSSRGAPRGGGRGGSRSDRGGGRSRY.

N-acetylmethionine; in Heterogeneous nuclear ribonucleoprotein G; alternate is present on Met-1. Val-2 is modified (N-acetylvaline; in Heterogeneous nuclear ribonucleoprotein G, N-terminally processed). One can recognise an RRM domain in the interval 8–86 (GKLFIGGLNT…KAIKVEQATK (79 aa)). Lys-22 participates in a covalent cross-link: Glycyl lysine isopeptide (Lys-Gly) (interchain with G-Cter in SUMO2). Lys-30 is subject to N6-acetyllysine. Positions 61 to 80 (DAKDAARDMNGKSLDGKAIK) are enriched in basic and acidic residues. The interval 61–391 (DAKDAARDMN…SDRGGGRSRY (331 aa)) is disordered. Glycyl lysine isopeptide (Lys-Gly) (interchain with G-Cter in SUMO2) cross-links involve residues Lys-80 and Lys-86. 2 positions are modified to phosphoserine: Ser-88 and Ser-91. Residues 109-120 (LRGGRGGSGGTR) are compositionally biased toward gly residues. Arg-125, Arg-144, and Arg-164 each carry omega-N-methylarginine. Residues 151–164 (RGPPPRSGGPPPKR) show a composition bias toward pro residues. At Ser-165 the chain carries Phosphoserine. Omega-N-methylarginine is present on Arg-172. A Phosphoserine modification is found at Ser-174. Positions 186 to 236 (GRDSYGGPPRREPLPSRRDVYLSPRDDGYSTKDSYSSRDYPSSRDTRDYAP) are necessary for the association to nascent RNAPII transcripts and nuclear localization. Basic and acidic residues-rich tracts occupy residues 194-215 (PRREPLPSRRDVYLSPRDDGYS) and 241-274 (YTYRDYGHSSSRDDYPSRGYSDRDGYGRDRDYSD). Phosphoserine is present on residues Ser-261, Ser-328, Ser-329, Ser-330, and Ser-332. Positions 323–337 (SRDSYSSSRSDLYSS) are enriched in low complexity. The necessary for RNA-binding stretch occupies residues 333 to 391 (DLYSSGRDRVGRQDRGLPPSMERGYPPPRDSYSSSSRGAPRGGGRGGSRSDRGGGRSRY). Residues 338 to 347 (GRDRVGRQDR) show a composition bias toward basic and acidic residues. Phosphoserine is present on Ser-352. Low complexity predominate over residues 362–371 (DSYSSSSRGA). The segment covering 380 to 391 (SRSDRGGGRSRY) has biased composition (basic and acidic residues).

In terms of assembly, homomultimer. Found in the supraspliceosome complex. Identified in the spliceosome C complex. Forms a complex with ILF2, ILF3, YLPM1, KHDRBS1, NCOA5 and PPP1CA. Interacts with CLK2, KHDRBS2, KHDRBS3, SAFB/SAFB1, TRA2B and YTHDC1. Interacts with ERAP1; the interaction is RNA-independent. Interacts with PPIA/CYPA. In terms of processing, O-glycosylated. Arg-185 is dimethylated, probably to asymmetric dimethylarginine.

It localises to the nucleus. Its function is as follows. RNA-binding protein that plays several role in the regulation of pre- and post-transcriptional processes. Implicated in tissue-specific regulation of gene transcription and alternative splicing of several pre-mRNAs. Binds to and stimulates transcription from the tumor suppressor TXNIP gene promoter; may thus be involved in tumor suppression. When associated with SAFB, binds to and stimulates transcription from the SREBF1 promoter. Associates with nascent mRNAs transcribed by RNA polymerase II. Component of the supraspliceosome complex that regulates pre-mRNA alternative splice site selection. Can either activate or suppress exon inclusion; acts additively with TRA2B to promote exon 7 inclusion of the survival motor neuron SMN. Represses the splicing of MAPT/Tau exon 10. Binds preferentially to single-stranded 5'-CC[A/C]-rich RNA sequence motifs localized in a single-stranded conformation; probably binds RNA as a homodimer. Binds non-specifically to pre-mRNAs. Also plays a role in the cytoplasmic TNFR1 trafficking pathways; promotes both the IL-1-beta-mediated inducible proteolytic cleavage of TNFR1 ectodomains and the release of TNFR1 exosome-like vesicles to the extracellular compartment. This is RNA-binding motif protein, X chromosome (RBMX) from Macaca fascicularis (Crab-eating macaque).